A 601-amino-acid chain; its full sequence is DNA mismatch repair protein MutL (601 aa).

It belongs to the DNA mismatch repair MutL/HexB family.

Functionally, this protein is involved in the repair of mismatches in DNA. It is required for dam-dependent methyl-directed DNA mismatch repair. May act as a 'molecular matchmaker', a protein that promotes the formation of a stable complex between two or more DNA-binding proteins in an ATP-dependent manner without itself being part of a final effector complex. This is DNA mismatch repair protein MutL from Listeria monocytogenes serovar 1/2a (strain ATCC BAA-679 / EGD-e).